The chain runs to 862 residues: Cone cGMP-specific 3',5'-cyclic phosphodiesterase subunit alpha' (862 aa).

GAF domains are found at residues 75 to 224 (SMEK…SLVL) and 256 to 433 (DIER…GWSV). 3',5'-cyclic GMP contacts are provided by residues S97, N116, 169–172 (DKKT), and T176. The PDEase domain occupies 486-819 (DEKDLIRILK…VEWKTRADEY (334 aa)). The active-site Proton donor is the H562. Residues H566, H602, D603, and D723 each contribute to the a divalent metal cation site. The span at 830-842 (KKKEEEAAAKKAE) shows a compositional bias: basic and acidic residues. The disordered stretch occupies residues 830–862 (KKKEEEAAAKKAENAAGGGGGGEDGKSKTCIVL). C859 carries the post-translational modification Cysteine methyl ester. Residue C859 is the site of S-geranylgeranyl cysteine attachment. Positions 860–862 (IVL) are cleaved as a propeptide — removed in mature form.

This sequence belongs to the cyclic nucleotide phosphodiesterase family. In terms of assembly, composed of two alpha' subunits that are associated with 3 smaller proteins of 11, 13, and 15 kDa. It depends on a divalent metal cation as a cofactor.

It localises to the cell membrane. The enzyme catalyses 3',5'-cyclic GMP + H2O = GMP + H(+). Functionally, as cone-specific cGMP phosphodiesterase, it plays an essential role in light detection and cone phototransduction by rapidly decreasing intracellular levels of cGMP. This Gallus gallus (Chicken) protein is Cone cGMP-specific 3',5'-cyclic phosphodiesterase subunit alpha' (PDE6C).